Reading from the N-terminus, the 186-residue chain is Inner membrane-spanning protein YciB (186 aa).

6 helical membrane passes run 3-23, 24-44, 49-69, 76-96, 121-141, and 149-169; these read FLFD…AGIY, VATT…WFKH, AMQW…LIFH, WKPT…AVLL, LVWS…AYHF, and FKLF…SVWL.

Belongs to the YciB family.

The protein resides in the cell inner membrane. Plays a role in cell envelope biogenesis, maintenance of cell envelope integrity and membrane homeostasis. This chain is Inner membrane-spanning protein YciB, found in Ralstonia nicotianae (strain ATCC BAA-1114 / GMI1000) (Ralstonia solanacearum).